The following is a 258-amino-acid chain: Pro-thyrotropin-releasing hormone-A (258 aa).

Residues 1–22 (MKSACLIILASLVVCNLTLARG) form the signal peptide. Gln-78 is subject to Pyrrolidone carboxylic acid. Residue Pro-80 is modified to Proline amide. Composition is skewed to basic and acidic residues over residues 84-98 (YQEELEKRQHPGKRE) and 107-119 (EVQKRQHPGKRED). The tract at residues 84-124 (YQEELEKRQHPGKREEDEDEDYDEVQKRQHPGKREDEFDSF) is disordered. Gln-92 bears the Pyrrolidone carboxylic acid mark. Pro-94 is modified (proline amide). Position 112 is a pyrrolidone carboxylic acid (Gln-112). Pro-114 carries the post-translational modification Proline amide. At Gln-131 the chain carries Pyrrolidone carboxylic acid. Residue Pro-133 is modified to Proline amide. Gln-156 bears the Pyrrolidone carboxylic acid mark. Pro-158 carries the proline amide modification. Disordered stretches follow at residues 166–215 (YSKR…PCDV) and 236–258 (SRAEKRQHPGKRSAPVEDLTEQE). At Gln-170 the chain carries Pyrrolidone carboxylic acid. Pro-172 is modified (proline amide). A compositionally biased stretch (basic and acidic residues) spans 184-193 (GDLRELEKRQ). Gln-193 bears the Pyrrolidone carboxylic acid mark. Pro-195 carries the post-translational modification Proline amide. At Gln-242 the chain carries Pyrrolidone carboxylic acid. At Pro-244 the chain carries Proline amide.

Belongs to the TRH family.

Its subcellular location is the secreted. Its function is as follows. Functions as a regulator of the biosynthesis of TSH in the anterior pituitary gland and as a neurotransmitter/ neuromodulator in the central and peripheral nervous systems. This Oncorhynchus nerka (Sockeye salmon) protein is Pro-thyrotropin-releasing hormone-A (trha).